We begin with the raw amino-acid sequence, 198 residues long: DnaJ homolog subfamily C member 12 (198 aa).

An N-acetylmethionine modification is found at Met1. The J domain occupies 14–79; that stretch reads DYYTLLGCDE…ESRARYDHWR (66 aa). Residues 121–183 are disordered; that stretch reads TNTAQNKERS…CGHLHFRWSG (63 aa). A compositionally biased stretch (basic and acidic residues) spans 126–156; the sequence is NKERSEQRETKQGDPDSTPEKMMQKESESPE. Residues Ser160, Ser166, and Ser182 each carry the phosphoserine modification.

As to quaternary structure, interacts with HSPA8. Interacts with TPH1. Interacts with TPH2.

Its subcellular location is the cytoplasm. Probable co-chaperone that participates in the proper folding of biopterin-dependent aromatic amino acid hydroxylases, which include phenylalanine-4-hydroxylase (PAH), tyrosine 3-monooxygenase (TH) and peripheral and neuronal tryptophan hydroxylases (TPH1 and TPH2). The protein is DnaJ homolog subfamily C member 12 (Dnajc12) of Rattus norvegicus (Rat).